A 122-amino-acid polypeptide reads, in one-letter code: Neuropeptide B (122 aa).

The first 24 residues, 1 to 24, serve as a signal peptide directing secretion; that stretch reads MAGPAMLVAAALALCLLLASPGLA. At tryptophan 25 the chain carries 6'-bromotryptophan. A propeptide spanning residues 56–122 is cleaved from the precursor; the sequence is SEPRGGTRSL…LSLSASDCRK (67 aa).

It belongs to the neuropeptide B/W family.

Its subcellular location is the secreted. In terms of biological role, may be involved in the regulation of feeding, neuroendocrine system, memory, learning and in the afferent pain pathway. The chain is Neuropeptide B (NPB) from Bos taurus (Bovine).